Here is a 552-residue protein sequence, read N- to C-terminus: L-ascorbate oxidase (552 aa).

Plastocyanin-like domains follow at residues 1–122 and 134–300; these read SQIR…LIVD and DGEI…NYLP. 3 disulfide bridges follow: Cys-19–Cys-201, Cys-81–Cys-538, and Cys-180–Cys-193. Cu cation contacts are provided by His-60 and His-62. N-linked (GlcNAc...) asparagine glycosylation occurs at Asn-92. His-104 and His-106 together coordinate Cu cation. Residues Asn-325 and Asn-440 are each glycosylated (N-linked (GlcNAc...) asparagine). A Plastocyanin-like 3 domain is found at 344–523; the sequence is NRRIFLLNTQ…HMGMGVVFAE (180 aa). Cu cation is bound by residues His-445, His-448, His-450, His-506, Cys-507, His-508, His-512, and Met-517.

It belongs to the multicopper oxidase family. In terms of assembly, dimer. Cu cation serves as cofactor.

It is found in the secreted. The catalysed reaction is 4 L-ascorbate + O2 = 4 monodehydro-L-ascorbate radical + 2 H2O. May be involved in a redox system involving ascorbic acid. The sequence is that of L-ascorbate oxidase from Cucurbita pepo var. melopepo (Zucchini).